The primary structure comprises 504 residues: Probable GTP-binding protein OBGC2 (504 aa).

Over residues 24 to 39 (AHRDARPALRLPELHA) the composition is skewed to basic and acidic residues. 2 disordered regions span residues 24-46 (AHRD…RRNN) and 93-122 (VLAM…GVKK). The region spanning 73–276 (HKYFDHAVVT…VSLELILRVV (204 aa)) is the Obg domain. The span at 107-122 (SPRRRSDKGKRSGVKK) shows a compositional bias: basic residues. The 218-residue stretch at 277–494 (ADVGLVGLPN…MLKEIRAALR (218 aa)) folds into the OBG-type G domain. Residues 283–290 (GLPNAGKS) and 337–341 (DLPGL) contribute to the GTP site. The span at 436–452 (SEDSLNGNTGEHNTSSE) shows a compositional bias: polar residues. A disordered region spans residues 436–463 (SEDSLNGNTGEHNTSSETKVEGGEKELR). Residues 453-463 (TKVEGGEKELR) are compositionally biased toward basic and acidic residues.

Belongs to the TRAFAC class OBG-HflX-like GTPase superfamily. OBG GTPase family.

May bind GTP and have GTPase activity. This Oryza sativa subsp. japonica (Rice) protein is Probable GTP-binding protein OBGC2.